A 772-amino-acid polypeptide reads, in one-letter code: DNA ligase (772 aa).

Residues 80-84 (DAEYD), 130-131 (SL), and Glu160 each bind NAD(+). Lys162 (N6-AMP-lysine intermediate) is an active-site residue. NAD(+) is bound by residues Arg183, Glu220, Lys336, and Lys360. Zn(2+) is bound by residues Cys454, Cys457, Cys473, and Cys479. In terms of domain architecture, BRCT spans 685-772 (APEQTLEGLT…NGPQGITTIG (88 aa)).

Belongs to the NAD-dependent DNA ligase family. LigA subfamily. Mg(2+) is required as a cofactor. Mn(2+) serves as cofactor.

The enzyme catalyses NAD(+) + (deoxyribonucleotide)n-3'-hydroxyl + 5'-phospho-(deoxyribonucleotide)m = (deoxyribonucleotide)n+m + AMP + beta-nicotinamide D-nucleotide.. In terms of biological role, DNA ligase that catalyzes the formation of phosphodiester linkages between 5'-phosphoryl and 3'-hydroxyl groups in double-stranded DNA using NAD as a coenzyme and as the energy source for the reaction. It is essential for DNA replication and repair of damaged DNA. The chain is DNA ligase from Cutibacterium acnes (strain DSM 16379 / KPA171202) (Propionibacterium acnes).